A 251-amino-acid chain; its full sequence is uncharacterized protein (251 aa).

Positions 21–246 (KGSSPFAFYA…ITYEEFNKQL (226 aa)) constitute an AMMECR1 domain.

This is an uncharacterized protein from Saccharomyces cerevisiae (strain ATCC 204508 / S288c) (Baker's yeast).